The following is an 85-amino-acid chain: Putative membrane protein insertion efficiency factor (85 aa).

Belongs to the UPF0161 family.

The protein localises to the cell inner membrane. In terms of biological role, could be involved in insertion of integral membrane proteins into the membrane. The chain is Putative membrane protein insertion efficiency factor from Serratia proteamaculans (strain 568).